The primary structure comprises 447 residues: Na(+)-translocating NADH-quinone reductase subunit A (447 aa).

Belongs to the NqrA family. As to quaternary structure, composed of six subunits; NqrA, NqrB, NqrC, NqrD, NqrE and NqrF.

It catalyses the reaction a ubiquinone + n Na(+)(in) + NADH + H(+) = a ubiquinol + n Na(+)(out) + NAD(+). Its function is as follows. NQR complex catalyzes the reduction of ubiquinone-1 to ubiquinol by two successive reactions, coupled with the transport of Na(+) ions from the cytoplasm to the periplasm. NqrA to NqrE are probably involved in the second step, the conversion of ubisemiquinone to ubiquinol. In Yersinia pestis, this protein is Na(+)-translocating NADH-quinone reductase subunit A.